Here is a 274-residue protein sequence, read N- to C-terminus: Large ribosomal subunit protein uL2 (274 aa).

A disordered region spans residues 223-274 (VAMNPVDHPHGGGEGRTSGGRHPVTPWGVPTKGYKTRSNKRTDKYIVRRRNK).

The protein belongs to the universal ribosomal protein uL2 family. In terms of assembly, part of the 50S ribosomal subunit. Forms a bridge to the 30S subunit in the 70S ribosome.

Its function is as follows. One of the primary rRNA binding proteins. Required for association of the 30S and 50S subunits to form the 70S ribosome, for tRNA binding and peptide bond formation. It has been suggested to have peptidyltransferase activity; this is somewhat controversial. Makes several contacts with the 16S rRNA in the 70S ribosome. In Shewanella sp. (strain ANA-3), this protein is Large ribosomal subunit protein uL2.